The primary structure comprises 3946 residues: Hybrid PKS-NRPS synthetase lepA (3946 aa).

One can recognise a Ketosynthase family 3 (KS3) domain in the interval 9-440 (VEPIAIVGSA…GTNAHVILEG (432 aa)). Catalysis depends on for beta-ketoacyl synthase activity residues Cys-183, His-320, and His-363. Positions 553–871 (IFTGQGAQWA…PYAGIMRRAT (319 aa)) are malonyl-CoA:ACP transacylase (MAT) domain. An N-terminal hotdog fold region spans residues 945 to 1073 (HELLGRRAPD…GRLILFKGEG (129 aa)). Positions 945-1238 (HELLGRRAPD…RLQSFTEAKA (294 aa)) are dehydratase (DH) domain. Positions 945-1239 (HELLGRRAPD…LQSFTEAKAL (295 aa)) constitute a PKS/mFAS DH domain. The active-site Proton acceptor; for dehydratase activity is His-977. The segment at 1088–1239 (LSPLDREMFY…LQSFTEAKAL (152 aa)) is C-terminal hotdog fold. Asp-1147 functions as the Proton donor; for dehydratase activity in the catalytic mechanism. A methyltransferase (MT) domain region spans residues 1380-1580 (LLNRFYTDGR…ATVSDLPSDG (201 aa)). The ketoreductase (KR) domain stretch occupies residues 2093 to 2266 (TYWMIGLNSE…AASVIDIGLV (174 aa)). Over residues 2352 to 2365 (SSQDSDQSNSTSAS) the composition is skewed to low complexity. Positions 2352–2372 (SSQDSDQSNSTSASIRDQVSS) are disordered. The Carrier 1 domain occupies 2378-2455 (EGTDVLLRCF…EICAEAIQKF (78 aa)). Ser-2415 carries the post-translational modification O-(pantetheine 4'-phosphoryl)serine. Residues 2474–2531 (KQATASPPEIGREEAQSTSRAGILPTDQDNDNSSDSESQRKSGASSSSGSGTRTPTSI) form a disordered region. A compositionally biased stretch (low complexity) spans 2508 to 2530 (DSESQRKSGASSSSGSGTRTPTS). A condensation (C) domain region spans residues 2547–2976 (PMSYAQSRLW…MQIQDGLLND (430 aa)). Positions 3000-3402 (FSQRAATDAN…GGLIFMGRLD (403 aa)) are adenylation (A) (KR) domain. Positions 3492-3511 (GKVDRKALQDKPLPTEPDSS) are disordered. A Carrier 2 domain is found at 3515–3594 (EALSLAEGEL…RMATLIDAEK (80 aa)). Ser-3554 carries the post-translational modification O-(pantetheine 4'-phosphoryl)serine. A reductase (RED) domain region spans residues 3633–3833 (LTGSTGFLGM…RFSVLMKVVP (201 aa)).

The protein in the C-terminal section; belongs to the NRP synthetase family.

Its function is as follows. Hybrid PKS-NRPS synthetase; part of the gene cluster 23 that mediates the biosynthesis of a family of 2-pyridones known as leporins. The hybrid PKS-NRPS synthetase lepA and the enoyl reductase lepG are responsible for fusion of phenylalanine with a hexaketide and subsequent release of the stable tetramic acid precursor, pre-leporin C. Because lepA lacks a designated enoylreductase (ER) domain, the required activity is provided the enoyl reductase lepG. It is possible that the dehydrogenase lepF also participates in production of pre-leporin C. Cytochrome P450 monooxygenase lepH is then required for the ring expansion step to yield leporin C. Leporin C is then presumably further oxidized by the N-hydroxylase lepD to form leporin B. LepI may possess a function in biosynthesis upstream of lepA. Leporin B is further oxidized in the presence of ferric ion to give the leporin B trimer-iron chelate, but whether or not this reaction is catalyzed by an enzyme in the pathway or by ferric ion is not determined yet. The polypeptide is Hybrid PKS-NRPS synthetase lepA (Aspergillus flavus (strain ATCC 200026 / FGSC A1120 / IAM 13836 / NRRL 3357 / JCM 12722 / SRRC 167)).